We begin with the raw amino-acid sequence, 510 residues long: 2,3-bisphosphoglycerate-independent phosphoglycerate mutase (510 aa).

Residues D12 and S62 each contribute to the Mn(2+) site. The active-site Phosphoserine intermediate is the S62. Residues H123, 153–154, R185, R191, 260–263, and K333 contribute to the substrate site; these read RD and RPDR. Mn(2+) contacts are provided by D400, H404, D441, H442, and H460.

This sequence belongs to the BPG-independent phosphoglycerate mutase family. In terms of assembly, monomer. The cofactor is Mn(2+).

It carries out the reaction (2R)-2-phosphoglycerate = (2R)-3-phosphoglycerate. It functions in the pathway carbohydrate degradation; glycolysis; pyruvate from D-glyceraldehyde 3-phosphate: step 3/5. In terms of biological role, catalyzes the interconversion of 2-phosphoglycerate and 3-phosphoglycerate. The protein is 2,3-bisphosphoglycerate-independent phosphoglycerate mutase of Clostridium acetobutylicum (strain ATCC 824 / DSM 792 / JCM 1419 / IAM 19013 / LMG 5710 / NBRC 13948 / NRRL B-527 / VKM B-1787 / 2291 / W).